The chain runs to 368 residues: MRTEIENYVKKIEQSLELLWRSLDVEASTERLNALEELTADPSLWNDQANAQKLLREKSNLEEKLNAFNKLKSNLKDALELEEMAEAENDLETLSQIEQDLKNLSIIAAKFETECLFSGEADGNNCFLEINAGAGGTESHDWASIMMRMYLRFAERLGFKTEIINMINGEEAGIKSCTIRIIGKRAYGWFKTETGVHRLVRISPFNAAGKRMTSFASSWVYPEIDDNIAITIEDKDLRIDTFRASGAGGQHVNTTDSAVRITHIPTGTVTQCQSDRSQHKNKAQAMKMLQAKLYELEMQKRTDSVNEQNATKTDNSWGHQIRSYVLQPYHMVKDLRTDYETSDTKGVLDGDLEEFVSANLAMNVGGKK.

An N5-methylglutamine modification is found at Q250.

It belongs to the prokaryotic/mitochondrial release factor family. Methylated by PrmC. Methylation increases the termination efficiency of RF2.

It localises to the cytoplasm. Its function is as follows. Peptide chain release factor 2 directs the termination of translation in response to the peptide chain termination codons UGA and UAA. The polypeptide is Peptide chain release factor 2 (Rickettsia africae (strain ESF-5)).